Consider the following 408-residue polypeptide: MINALKGMKDLLDKDAYYYEKVIQTCEEVVKNYGFTFINTPHLELCILFKRSVGESSDIVGKEMYEFIDKGENHVCMRPEGTAGVVRAYIEKKLDKNTSVKRWFYHGSMFRYERPQKGRLREFHQFGVESFGNASVYEDASIILMLVEIFSRLDIKFKLLINSLGCLECMPKYRENLIHFLDSKEGFCEDCLRRKNLNPIRVLDCKNEHCQSLLNDAPLLNQNLCSSCQKDFEILQSVLKENGVDFEVDSKLVRGLDYYSKTAFEFISDEIGAKAAIAGGGRYDRLIEYLDGKSGFGIGFAMGIERIIAILEQKEEKVQREGIYLCAMDKIYIQKLLHIATNLRKEHKVLLSYEARKLAKHLENADKNNAEIFLCMGENEVQNESLFYKNLVKKEEKMIKISDLKKVL.

Belongs to the class-II aminoacyl-tRNA synthetase family. As to quaternary structure, homodimer.

The protein localises to the cytoplasm. The catalysed reaction is tRNA(His) + L-histidine + ATP = L-histidyl-tRNA(His) + AMP + diphosphate + H(+). The protein is Histidine--tRNA ligase of Campylobacter jejuni subsp. doylei (strain ATCC BAA-1458 / RM4099 / 269.97).